The primary structure comprises 96 residues: GQMPLHMRLPKLKGFKNPFKTEFQVVNLDKLAALYPEGGEVTVADLVAKGAVRKNSLVKVLGQGEISVALQVTVDAVSGSAKEKITAAGGTVTELV.

It belongs to the universal ribosomal protein uL15 family. As to quaternary structure, part of the 50S ribosomal subunit.

Its function is as follows. Binds to the 23S rRNA. This is Large ribosomal subunit protein uL15 (rplO) from Streptomyces scabiei.